Consider the following 759-residue polypeptide: Solute carrier family 26 member 6 (759 aa).

Over 1 to 115 the chain is Cytoplasmic; sequence MGLADASGPR…PQGLAYALLA (115 aa). The helical transmembrane segment at 116–136 threads the bilayer; sequence GLPPVFGLYSSFYPVFIYFLF. At 137–186 the chain is on the extracellular side; sequence GTSRHISVGTFAVMSVMVGSVTESLAPQALNDSMINETARDAARVQVAST. N-linked (GlcNAc) asparagine glycosylation is found at Asn-167 and Asn-172. A helical transmembrane segment spans residues 187-207; the sequence is LSVLVGLFQVGLGLIHFGFVV. Residues 208–263 lie on the Cytoplasmic side of the membrane; that stretch reads TYLSEPLVRGYTTAAAVQVFVSQLKYVFGLHLSSHSGPLSLIYTVLEVCWKLPQSK. A helical membrane pass occupies residues 264 to 284; sequence VGTVVTAAVAGVVLVVVKLLN. Topologically, residues 285–293 are extracellular; the sequence is DKLQQQLPM. Residues 294–314 traverse the membrane as a helical segment; that stretch reads PIPGELLTLIGATGISYGMGL. Residues 315–347 are Cytoplasmic-facing; that stretch reads KHRFEVDVVGNIPAGLVPPVAPNTQLFSKLVGS. A helical transmembrane segment spans residues 348–368; sequence AFTIAVVGFAIAISLGKIFAL. Residues 369–379 are Extracellular-facing; the sequence is RHGYRVDSNQE. The chain crosses the membrane as a helical span at residues 380–400; that stretch reads LVALGLSNLIGGIFQCFPVSC. Residues 401 to 416 lie on the Cytoplasmic side of the membrane; the sequence is SMSRSLVQESTGGNSQ. The helical transmembrane segment at 417-437 threads the bilayer; sequence VAGAISSLFILLIIVKLGELF. The Extracellular portion of the chain corresponds to 438-484; that stretch reads HDLPKAVLAAIIIVNLKGMLRQLSDMRSLWKANRADLLIWLVTFTAT. A helical membrane pass occupies residues 485–505; that stretch reads ILLNLDLGLVVAVIFSLLLVV. Residues 506–759 lie on the Cytoplasmic side of the membrane; it reads VRTQMPHYSV…PDSPVSVTRL (254 aa). One can recognise an STAS domain in the interval 530–742; sequence EYSEAKEVRG…ASVHDAVTFA (213 aa). A phosphoserine; by PKC mark is found at Asn-553 and Lys-582. Ser-616 is modified (phosphoserine). The tract at residues 636 to 657 is disordered; sequence GDKMEDATANGQEDSKAPDGST. 2 positions are modified to phosphoserine: Ser-752 and Ser-755.

The protein belongs to the SLC26A/SulP transporter (TC 2.A.53) family. In terms of assembly, interacts (via C-terminal domain) with PDZK1 (via C-terminal PDZ domain); the interaction induces chloride and oxalate exchange transport. Interacts with CFTR and SLC26A3. Interacts with AHCYL1; the interaction increases SLC26A6 activity. Interacts with NHERF1 (via the PDZ domains) and NHERF2 (via the PDZ domains). Interacts (via C-terminal cytoplasmic domain) with CA2; the interaction stimulates chloride-bicarbonate exchange activity. As to quaternary structure, interacts with NHERF1 (via the PDZ domains) and NHERF2 (via the PDZ domains). In terms of processing, phosphorylated on serine residues by PKC; the phosphorylation disrupts interaction with carbonic anhydrase CA2 and reduces bicarbonate transport activity in a phorbol myristate acetate (PMA)-induced manner. Glycosylation at Asn-167 and Asn-172 positively regulates its chloride oxalate exchanger activity. In terms of tissue distribution, ubiquitous. Highest levels in kidney and pancreas. Lower expression in heart, skeletal muscle, liver and placenta. Also found in lung and brain. Ubiquitously expressed. Highest levels expressed in the kidney and pancreas. As to expression, expressed weakly in placenta, lung, liver and pancreas. In terms of tissue distribution, expressed in heart, brain, placenta, lung, liver, kidney, pancreas, spleen, thymus, prostate, testis and ovary.

It is found in the cell membrane. The protein localises to the apical cell membrane. It localises to the cytoplasmic vesicle membrane. The protein resides in the microsome. Its subcellular location is the basolateral cell membrane. It carries out the reaction 2 hydrogencarbonate(in) + chloride(out) = 2 hydrogencarbonate(out) + chloride(in). The catalysed reaction is oxalate(in) + chloride(out) = oxalate(out) + chloride(in). The enzyme catalyses oxalate(in) + formate(out) = oxalate(out) + formate(in). It catalyses the reaction oxalate(in) + sulfate(out) = oxalate(out) + sulfate(in). It carries out the reaction 2 hydrogencarbonate(out) + sulfate(in) = 2 hydrogencarbonate(in) + sulfate(out). With respect to regulation, oxalate transport activity is inhibited by 4,4'-diisothiocyanatostilbene-2,2'-disulfonic acid (DIDS). Chloride, bicarbonate and sulfate transport activities are inhibited by 4,4'-diisothiocyanatostilbene-2,2'-disulfonic acid (DIDS). Its function is as follows. Apical membrane anion-exchanger with wide epithelial distribution that plays a role as a component of the pH buffering system for maintaining acid-base homeostasis. Acts as a versatile DIDS-sensitive inorganic and organic anion transporter that mediates the uptake of monovalent anions like chloride, bicarbonate, formate and hydroxyl ion and divalent anions like sulfate and oxalate. Functions in multiple exchange modes involving pairs of these anions, which include chloride-bicarbonate, chloride-oxalate, oxalate-formate, oxalate-sulfate and chloride-formate exchange. Apical membrane chloride-bicarbonate exchanger that mediates luminal chloride absorption and bicarbonate secretion by the small intestinal brush border membrane and contributes to intracellular pH regulation in the duodenal upper villous epithelium during proton-coupled peptide absorption, possibly by providing a bicarbonate import pathway. Also mediates intestinal chloride absorption and oxalate secretion, thereby preventing hyperoxaluria and calcium oxalate urolithiasis. Transepithelial oxalate secretion, chloride-formate, chloride-oxalate and chloride-bicarbonate transport activities in the duodenum are inhibited by PKC activation in a calcium-independent manner. The apical membrane chloride-bicarbonate exchanger also provides a major route for fluid and bicarbonate secretion into the proximal tubules of the kidney as well as into the proximal part of the interlobular pancreatic ductal tree, where it mediates electrogenic chloride-bicarbonate exchange with a chloride-bicarbonate stoichiometry of 1:2, and hence will dilute and alkalinize protein-rich acinar secretion. Also mediates the transcellular sulfate absorption and oxalate secretion across the apical membrane in the duodenum and the formate ion efflux at the apical brush border of cells in the proximal tubules of kidney. Plays a role in sperm capacitation by increasing intracellular pH. In terms of biological role, apical membrane chloride-bicarbonate exchanger. Its association with carbonic anhydrase CA2 forms a bicarbonate transport metabolon; hence maximizes the local concentration of bicarbonate at the transporter site. The sequence is that of Solute carrier family 26 member 6 (SLC26A6) from Homo sapiens (Human).